The sequence spans 555 residues: GPI-anchor transamidase component PIGS (555 aa).

Residues 2–18 are Cytoplasmic-facing; that stretch reads AAAGAAATHLEVARGKR. Arg-15 and Arg-18 together coordinate a cardiolipin. The chain crosses the membrane as a helical span at residues 19–39; sequence AALFFAAVAIVLGLPLWWKTT. Over 40-517 the chain is Lumenal; it reads ETYRASLPYS…LHLLYFPDDQ (478 aa). Residues Asn-267 and Asn-370 are each glycosylated (N-linked (GlcNAc...) asparagine). Residues 518 to 532 traverse the membrane as a helical segment; it reads KFAIYIPLFLPMAVP. At 533-555 the chain is on the cytoplasmic side; the sequence is ILLSLVKIFLETRKSWRKPEKTD.

This sequence belongs to the PIGS family. In terms of assembly, heteropentamer. Part of the GPI-anchor transamidase complex, consisting of PIGK, PIGT, PIGS, PIGU and GAA1.

It is found in the endoplasmic reticulum membrane. Its pathway is glycolipid biosynthesis; glycosylphosphatidylinositol-anchor biosynthesis. Component of the glycosylphosphatidylinositol-anchor (GPI-anchor) transamidase (GPI-T) complex that catalyzes the formation of the linkage between a proprotein and a GPI-anchor and participates in GPI anchored protein biosynthesis. The chain is GPI-anchor transamidase component PIGS from Homo sapiens (Human).